The primary structure comprises 402 residues: Protein FAM221B (402 aa).

Basic and acidic residues predominate over residues 1 to 35; the sequence is MEAHEIIEEPHITMDAEKHPPSKDPSAEDLQENHI. 2 disordered regions span residues 1–205 and 378–402; these read MEAH…TARP and DTQK…HRPL. 2 stretches are compositionally biased toward polar residues: residues 77 to 90 and 393 to 402; these read EPSI…TPTY and DTVSNWHRPL.

It belongs to the FAM221 family.

The polypeptide is Protein FAM221B (FAM221B) (Homo sapiens (Human)).